A 291-amino-acid chain; its full sequence is ATP synthase gamma chain (291 aa).

It belongs to the ATPase gamma chain family. In terms of assembly, F-type ATPases have 2 components, CF(1) - the catalytic core - and CF(0) - the membrane proton channel. CF(1) has five subunits: alpha(3), beta(3), gamma(1), delta(1), epsilon(1). CF(0) has three main subunits: a, b and c.

The protein localises to the cell membrane. In terms of biological role, produces ATP from ADP in the presence of a proton gradient across the membrane. The gamma chain is believed to be important in regulating ATPase activity and the flow of protons through the CF(0) complex. The chain is ATP synthase gamma chain from Streptococcus pyogenes serotype M49 (strain NZ131).